The sequence spans 258 residues: LLLLLALKTLWAVGNRFEAQIIGGREAVPHSRPYMVSLQNTKSHMCGGVLVHQKWVLTAAHCLSEPLQQLKLVFGLHSLHDPQDPGLTFYIKQAIKHPGYNLKYENDLALLKLDGRVKPSKNVKPLALPRKPRDKPAEGSRCSTAGWGITHQRGQLAKSLQELDLRLLDTRMCNNSRFWNGVLTDSMLCLKAGAKGQAPCKGDSGGPLVCGKGKVDGILSFSSKNCTDIFKPTVATAVAPYSSWIRKVIGRWSPQPLT.

The Peptidase S1 domain maps to 21-250; the sequence is IIGGREAVPH…YSSWIRKVIG (230 aa). Residues Cys46 and Cys62 are joined by a disulfide bond. Catalysis depends on charge relay system residues His61 and Asp107. Positions 122–141 are disordered; it reads NVKPLALPRKPRDKPAEGSR. 3 disulfide bridges follow: Cys142–Cys210, Cys173–Cys189, and Cys200–Cys226. Residue Asn174 is glycosylated (N-linked (GlcNAc...) asparagine). Ser204 acts as the Charge relay system in catalysis. Residue Asn225 is glycosylated (N-linked (GlcNAc...) asparagine).

The protein belongs to the peptidase S1 family. Granzyme subfamily.

The protein resides in the secreted. It localises to the cytoplasmic granule. Cleaves peptide substrates after methionine, leucine, and norleucine. Physiological substrates include EZR, alpha-tubulins and the apoptosis inhibitor BIRC5/Survivin. Promotes caspase activation and subsequent apoptosis of target cells. This chain is Granzyme M (Gzmm), found in Rattus norvegicus (Rat).